The sequence spans 1021 residues: Multidrug resistance protein MdtC (1021 aa).

Residues 1 to 6 are Cytoplasmic-facing; it reads MKFFAL. A helical transmembrane segment spans residues 7 to 29; it reads FIYRPVATILLSVAITLCGILGF. Residues 30–335 lie on the Periplasmic side of the membrane; the sequence is RMLPVAPLPQ…TIRASLEEVE (306 aa). The helical transmembrane segment at 336 to 353 threads the bilayer; that stretch reads QTLIISVALVILVVFLFL. Topologically, residues 354–359 are cytoplasmic; sequence RSGRAT. The helical transmembrane segment at 360–379 threads the bilayer; the sequence is IIPAVAVPVSLIGTFAAMYL. The Periplasmic portion of the chain corresponds to 380-388; the sequence is CGFSLNNLS. The chain crosses the membrane as a helical span at residues 389 to 411; sequence LMALTIATGFVVDDAIVVLENIA. The Cytoplasmic portion of the chain corresponds to 412 to 430; it reads RHLEAGMKPLQAALQGTRE. A helical transmembrane segment spans residues 431–453; the sequence is VGFTVLSMSLSLVAVFLPLLLMG. The Periplasmic portion of the chain corresponds to 454–467; sequence GLPGRLLREFAVTL. A helical membrane pass occupies residues 468 to 490; the sequence is SVAIGISLLVSLTLTPMMCGWML. Topologically, residues 491-848 are cytoplasmic; it reads KASKPREQKR…QVFQETMNSQ (358 aa). The helical transmembrane segment at 849–871 threads the bilayer; it reads VILIIAAIATVYIVLGILYESYV. The Periplasmic segment spans residues 872–890; that stretch reads HPLTILSTLPSAGVGALLA. A helical transmembrane segment spans residues 891–913; sequence LELFNAPFSLIALIGIMLLIGIV. At 914 to 943 the chain is on the cytoplasmic side; the sequence is KKNAIMMVDFALEAQRHGNLTPQEAIFQAC. Residues 944 to 966 traverse the membrane as a helical segment; the sequence is LLRFRPIMMTTLAALFGALPLVL. At 967–980 the chain is on the periplasmic side; it reads SGGDGSELRQPLEI. Residues 981-1003 traverse the membrane as a helical segment; it reads TIVGGLVMSQLLTLYTTPVVYLF. Over 1004–1021 the chain is Cytoplasmic; the sequence is FDRLRLRFSRKPKQTVTE.

It belongs to the resistance-nodulation-cell division (RND) (TC 2.A.6) family. MdtC subfamily. As to quaternary structure, part of a tripartite efflux system composed of MdtA, MdtB and MdtC. MdtC forms a heteromultimer with MdtB.

It localises to the cell inner membrane. In Shigella flexneri, this protein is Multidrug resistance protein MdtC.